Consider the following 192-residue polypeptide: MANAAQKKLAAQNKHILTFMLAADLIVNVLFWILRFFVRSGLSKFSKFVYAFASISSGFLHYQLHRAAAPKYDARGSLLYVGQDLLQEGVTSYMVDYMYFSWILIFLAALTSVKVFAFYLLVPIFVVYKAAPLLKMLLQQLKNFKNQALNQPPQQQQQQQQQQHQQHATPSEPVLSKRQQKLRKKAAKYSRP.

2 helical membrane-spanning segments follow: residues 16–36 (ILTF…ILRF) and 102–122 (WILI…YLLV). The disordered stretch occupies residues 149–192 (LNQPPQQQQQQQQQQHQQHATPSEPVLSKRQQKLRKKAAKYSRP). Residues 151–167 (QPPQQQQQQQQQQHQQH) show a composition bias toward low complexity. Residues 178-192 (RQQKLRKKAAKYSRP) show a composition bias toward basic residues.

The protein belongs to the TMEM208 family.

The protein localises to the endoplasmic reticulum membrane. May function in a SRP (signal recognition particle) and GET (guided entry of tail-anchored proteins) independent pathway for targeting a broad range of substrate proteins to the endoplasmic reticulum. Has a role in meiosis. This Schizosaccharomyces pombe (strain 972 / ATCC 24843) (Fission yeast) protein is SRP-independent targeting protein 2 homolog.